We begin with the raw amino-acid sequence, 458 residues long: tRNA(Ile)-lysidine synthase (458 aa).

Residue serine 36 to serine 41 coordinates ATP.

The protein belongs to the tRNA(Ile)-lysidine synthase family.

It is found in the cytoplasm. The catalysed reaction is cytidine(34) in tRNA(Ile2) + L-lysine + ATP = lysidine(34) in tRNA(Ile2) + AMP + diphosphate + H(+). Functionally, ligates lysine onto the cytidine present at position 34 of the AUA codon-specific tRNA(Ile) that contains the anticodon CAU, in an ATP-dependent manner. Cytidine is converted to lysidine, thus changing the amino acid specificity of the tRNA from methionine to isoleucine. The chain is tRNA(Ile)-lysidine synthase from Protochlamydia amoebophila (strain UWE25).